An 88-amino-acid polypeptide reads, in one-letter code: Putative membrane protein insertion efficiency factor (88 aa).

This sequence belongs to the UPF0161 family.

It localises to the cell inner membrane. In terms of biological role, could be involved in insertion of integral membrane proteins into the membrane. This chain is Putative membrane protein insertion efficiency factor, found in Coxiella burnetii (strain Dugway 5J108-111).